Here is a 471-residue protein sequence, read N- to C-terminus: Glutamate--tRNA ligase (471 aa).

Positions 9 to 19 match the 'HIGH' region motif; the sequence is PSPTGYLHVGG. Zn(2+) is bound by residues Cys98, Cys100, Cys125, and His127. The 'KMSKS' region motif lies at 237–241; the sequence is KLSKR. ATP is bound at residue Lys240.

It belongs to the class-I aminoacyl-tRNA synthetase family. Glutamate--tRNA ligase type 1 subfamily. Monomer. Zn(2+) serves as cofactor.

It localises to the cytoplasm. The catalysed reaction is tRNA(Glu) + L-glutamate + ATP = L-glutamyl-tRNA(Glu) + AMP + diphosphate. In terms of biological role, catalyzes the attachment of glutamate to tRNA(Glu) in a two-step reaction: glutamate is first activated by ATP to form Glu-AMP and then transferred to the acceptor end of tRNA(Glu). The protein is Glutamate--tRNA ligase of Citrobacter koseri (strain ATCC BAA-895 / CDC 4225-83 / SGSC4696).